Here is a 367-residue protein sequence, read N- to C-terminus: Alanine racemase (367 aa).

Residue K40 is the Proton acceptor; specific for D-alanine of the active site. Residue K40 is modified to N6-(pyridoxal phosphate)lysine. Residue R136 coordinates substrate. Residue Y263 is the Proton acceptor; specific for L-alanine of the active site. M310 contacts substrate.

It belongs to the alanine racemase family. The cofactor is pyridoxal 5'-phosphate.

It catalyses the reaction L-alanine = D-alanine. The protein operates within amino-acid biosynthesis; D-alanine biosynthesis; D-alanine from L-alanine: step 1/1. Its function is as follows. Catalyzes the interconversion of L-alanine and D-alanine. May also act on other amino acids. The chain is Alanine racemase (alr) from Streptococcus pneumoniae serotype 19F (strain G54).